Reading from the N-terminus, the 410-residue chain is Histidine--tRNA ligase (410 aa).

The protein belongs to the class-II aminoacyl-tRNA synthetase family. As to quaternary structure, homodimer.

The protein localises to the cytoplasm. It carries out the reaction tRNA(His) + L-histidine + ATP = L-histidyl-tRNA(His) + AMP + diphosphate + H(+). In Elusimicrobium minutum (strain Pei191), this protein is Histidine--tRNA ligase.